Reading from the N-terminus, the 261-residue chain is 3-deoxy-manno-octulosonate cytidylyltransferase (261 aa).

The protein belongs to the KdsB family.

The protein localises to the cytoplasm. The catalysed reaction is 3-deoxy-alpha-D-manno-oct-2-ulosonate + CTP = CMP-3-deoxy-beta-D-manno-octulosonate + diphosphate. Its pathway is nucleotide-sugar biosynthesis; CMP-3-deoxy-D-manno-octulosonate biosynthesis; CMP-3-deoxy-D-manno-octulosonate from 3-deoxy-D-manno-octulosonate and CTP: step 1/1. The protein operates within bacterial outer membrane biogenesis; lipopolysaccharide biosynthesis. Functionally, activates KDO (a required 8-carbon sugar) for incorporation into bacterial lipopolysaccharide in Gram-negative bacteria. The polypeptide is 3-deoxy-manno-octulosonate cytidylyltransferase (Marinobacter nauticus (strain ATCC 700491 / DSM 11845 / VT8) (Marinobacter aquaeolei)).